Consider the following 446-residue polypeptide: Phosphoglucosamine mutase (446 aa).

Residue Ser101 is the Phosphoserine intermediate of the active site. Residues Ser101, Asp240, Asp242, and Asp244 each contribute to the Mg(2+) site. A Phosphoserine modification is found at Ser101.

The protein belongs to the phosphohexose mutase family. The cofactor is Mg(2+). Activated by phosphorylation.

It catalyses the reaction alpha-D-glucosamine 1-phosphate = D-glucosamine 6-phosphate. Functionally, catalyzes the conversion of glucosamine-6-phosphate to glucosamine-1-phosphate. This is Phosphoglucosamine mutase from Coxiella burnetii (strain CbuK_Q154) (Coxiella burnetii (strain Q154)).